A 427-amino-acid chain; its full sequence is Enolase (427 aa).

Q162 is a (2R)-2-phosphoglycerate binding site. E204 functions as the Proton donor in the catalytic mechanism. Positions 241, 282, and 309 each coordinate Mg(2+). (2R)-2-phosphoglycerate contacts are provided by K334, R363, S364, and K385. K334 (proton acceptor) is an active-site residue.

Belongs to the enolase family. The cofactor is Mg(2+).

It is found in the cytoplasm. The protein resides in the secreted. It localises to the cell surface. The enzyme catalyses (2R)-2-phosphoglycerate = phosphoenolpyruvate + H2O. The protein operates within carbohydrate degradation; glycolysis; pyruvate from D-glyceraldehyde 3-phosphate: step 4/5. Its function is as follows. Catalyzes the reversible conversion of 2-phosphoglycerate (2-PG) into phosphoenolpyruvate (PEP). It is essential for the degradation of carbohydrates via glycolysis. This is Enolase from Frankia casuarinae (strain DSM 45818 / CECT 9043 / HFP020203 / CcI3).